The primary structure comprises 293 residues: GDT1-like protein 3 (293 aa).

The signal sequence occupies residues 1–25 (MGLISNPTRLILVATIFFLVSSISG). A run of 6 helical transmembrane segments spans residues 89–109 (FSMILVTEIGDETFIIAALMA), 115–135 (ATVLSGALSALFVMTILSTGL), 148–168 (TNSAATVLYAFFGLRLLYIAW), 200–220 (LFSRFCTPIFLESFILTFLAE), 238–258 (AIGVAIGASIGHTVCTSLAVV), and 272–292 (VATVGGLLFLGFSVSSYFYPP).

Belongs to the GDT1 family.

It is found in the membrane. The chain is GDT1-like protein 3 from Arabidopsis thaliana (Mouse-ear cress).